The primary structure comprises 237 residues: Protein PetR (237 aa).

The Response regulatory domain maps to 8 to 121 (HLLIVDDDER…ELLLRINAIL (114 aa)). Aspartate 57 is subject to 4-aspartylphosphate. Residues 77–95 (ATPILLLTARGETRERIEG) constitute a DNA-binding region (H-T-H motif). Residues 132–236 (PKYLSLGPLR…VRGLGYMLAP (105 aa)) constitute a DNA-binding region (ompR/PhoB-type).

Necessary for photosynthetic and respiratory growth. Probable promoter-specific protein mediating the interaction between DNA and RNA polymerase. The polypeptide is Protein PetR (petR) (Rhodobacter capsulatus (strain ATCC BAA-309 / NBRC 16581 / SB1003)).